Consider the following 321-residue polypeptide: Hex-5-enoyl-[acyl-carrier protein] acetylenase (321 aa).

Helical transmembrane passes span 36-56 (FLLY…LLWW) and 62-82 (VEIG…SVGL). The Histidine box-1 motif lies at 83-88 (HRYFAH). The helical transmembrane segment at 99–119 (VILAILGCMGAQGPVVSWVAV) threads the bilayer. The Histidine box-2 signature appears at 120 to 124 (HRRHH). The chain crosses the membrane as a helical span at residues 188 to 208 (YVVWIVLGLLIPTILGGIIHG). Residues 269–273 (QNNHH) carry the Histidine box-3 motif.

The protein belongs to the fatty acid desaturase type 2 family. The cofactor is Fe(2+).

Its subcellular location is the membrane. It carries out the reaction 5-hexenoyl-[ACP] + 2 reduced [2Fe-2S]-[ferredoxin] + O2 + 2 H(+) = 5-hexynoyl-[ACP] + 2 oxidized [2Fe-2S]-[ferredoxin] + 2 H2O. It catalyses the reaction hexanoyl-[ACP] + 2 reduced [2Fe-2S]-[ferredoxin] + O2 + 2 H(+) = 5-hexenoyl-[ACP] + 2 oxidized [2Fe-2S]-[ferredoxin] + 2 H2O. Its function is as follows. Desaturase involved in the biosynthesis of jamaicamides, which show sodium channel blocking activity and fish toxicity. Catalyzes the conversion of 5-hexenoyl loaded onto the acyl carrier protein JamC (5-hexenoyl-JamC) to 5-hexynoyl-JamC. Can also catalyze the conversion of hexanoyl-JamC to 5-hexenoyl-JamC, but it cannot use free 5-hexenoic acid, 5-hexenoyl-CoA, 2-hexenoyl-JamC, 3-hexenoyl-JamC or 4-hexenoyl-JamC. Is specific for C(6) chains, and cannot use 4-pentenoyl-JamC, 6-heptenoyl-JamC or 7-octenoyl-JamC as substrate. The polypeptide is Hex-5-enoyl-[acyl-carrier protein] acetylenase (Moorena producens (strain JHB)).